The sequence spans 550 residues: Methyl-accepting chemotaxis protein PcaY (550 aa).

The Cytoplasmic portion of the chain corresponds to 1–19 (MVPTRSTARMLANLKIRTG). A helical transmembrane segment spans residues 20-40 (MFWVLSLFSLTLLFSTASAWW). The Periplasmic portion of the chain corresponds to 41–198 (AALGSDQQIT…ESDRRLARAQ (158 aa)). Residues 44-196 (GSDQQITELD…MLESDRRLAR (153 aa)) form a ligand-binding domain region. Benzoate is bound by residues arginine 71 and asparagine 75. Positions 71, 75, and 135 each coordinate salicylate. 71 to 78 (RSSANVSS) serves as a coordination point for 3,4-dihydroxybenzoate. L-quinate is bound by residues 71 to 78 (RSSANVSS), tyrosine 135, glutamine 142, and asparagine 158. Residue glutamine 169 coordinates 3,4-dihydroxybenzoate. The helical transmembrane segment at 199-219 (LLSLCLLGVTVVLAVLCWAFI) threads the bilayer. At 220-550 (AQRVLHPLRE…MTALVGRFKV (331 aa)) the chain is on the cytoplasmic side. The region spanning 221 to 273 (QRVLHPLREAGGHFRRIASGDLSVPVQGQGNNEIGQLFHELQRMQQSQRDTLG) is the HAMP domain. Positions 278 to 514 (CARQLDAAAT…EVDRNLLNIR (237 aa)) constitute a Methyl-accepting transducer domain.

Belongs to the methyl-accepting chemotaxis (MCP) protein family. Ligand free PcaY_PP-ligand-binding domain (LBD) is present in a monomer-dimer equilibrium. Only the dimeric LBD is able to bind ligands which in turn causes dimer stabilization.

It localises to the cell inner membrane. Its function is as follows. Chemotactic-signal transducers respond to changes in the concentration of attractants and repellents in the environment, transduce a signal from the outside to the inside of the cell, and facilitate sensory adaptation through the variation of the level of methylation. PcaY recognizes a wide range of compounds containing a C6-membered ring with a carboxylate group. Binds preferentially compounds that serve as carbon sources and among them those that rapidly promote growth. Tightest binding compounds are quinate, shikimate, 3-dehydroshikimate and protocatechuate, which are at the interception of the biosynthetic shikimate and catabolic quinate pathways. The protein is Methyl-accepting chemotaxis protein PcaY of Pseudomonas putida (strain ATCC 47054 / DSM 6125 / CFBP 8728 / NCIMB 11950 / KT2440).